We begin with the raw amino-acid sequence, 245 residues long: Ribonuclease PH (245 aa).

Residues arginine 86 and 124-126 each bind phosphate; that span reads GTR.

It belongs to the RNase PH family. Homohexameric ring arranged as a trimer of dimers.

The catalysed reaction is tRNA(n+1) + phosphate = tRNA(n) + a ribonucleoside 5'-diphosphate. Phosphorolytic 3'-5' exoribonuclease that plays an important role in tRNA 3'-end maturation. Removes nucleotide residues following the 3'-CCA terminus of tRNAs; can also add nucleotides to the ends of RNA molecules by using nucleoside diphosphates as substrates, but this may not be physiologically important. Probably plays a role in initiation of 16S rRNA degradation (leading to ribosome degradation) during starvation. The polypeptide is Ribonuclease PH (Bacillus cereus (strain B4264)).